The following is a 433-amino-acid chain: Protein translocase subunit SecY (433 aa).

Helical transmembrane passes span 17-37 (IVFTILILIVCRFGSFIPIPG), 71-91 (IFALAIMPYITASIIIQLMSV), 117-137 (LTVLLASFQAYGVAISLESIV), 141-161 (GPVVILAGFFFRITTVITLVV), 184-204 (LIIFIGIISGVPSAIISMFEL), 212-232 (PLIAIAVCIGVVVLIAIIIFF), 268-288 (GVIPPIFASSILLFPATLANF), 310-330 (YILLYVALIMFFSFFYTAIVF), 366-386 (LTVIGGIYLSVICVIPELLMN), and 388-408 (YVISLSLGGTSFLIVVNVVLD).

It belongs to the SecY/SEC61-alpha family. Component of the Sec protein translocase complex. Heterotrimer consisting of SecY, SecE and SecG subunits. The heterotrimers can form oligomers, although 1 heterotrimer is thought to be able to translocate proteins. Interacts with the ribosome. Interacts with SecDF, and other proteins may be involved. Interacts with SecA.

The protein resides in the cell inner membrane. In terms of biological role, the central subunit of the protein translocation channel SecYEG. Consists of two halves formed by TMs 1-5 and 6-10. These two domains form a lateral gate at the front which open onto the bilayer between TMs 2 and 7, and are clamped together by SecE at the back. The channel is closed by both a pore ring composed of hydrophobic SecY resides and a short helix (helix 2A) on the extracellular side of the membrane which forms a plug. The plug probably moves laterally to allow the channel to open. The ring and the pore may move independently. This chain is Protein translocase subunit SecY, found in Rickettsia conorii (strain ATCC VR-613 / Malish 7).